The primary structure comprises 491 residues: Cysteine--tRNA ligase (491 aa).

Cys-31 contacts Zn(2+). The 'HIGH' region motif lies at 33–43; that stretch reads PTVYGDAHLGH. Positions 226, 251, and 255 each coordinate Zn(2+). Residues 283-287 carry the 'KMSKS' region motif; it reads KMGKS. Lys-286 is an ATP binding site.

This sequence belongs to the class-I aminoacyl-tRNA synthetase family. Monomer. Zn(2+) is required as a cofactor.

The protein resides in the cytoplasm. It carries out the reaction tRNA(Cys) + L-cysteine + ATP = L-cysteinyl-tRNA(Cys) + AMP + diphosphate. This Parabacteroides distasonis (strain ATCC 8503 / DSM 20701 / CIP 104284 / JCM 5825 / NCTC 11152) protein is Cysteine--tRNA ligase.